Here is a 414-residue protein sequence, read N- to C-terminus: Multifunctional CCA protein (414 aa).

Positions 8 and 11 each coordinate ATP. Positions 8 and 11 each coordinate CTP. 2 residues coordinate Mg(2+): D21 and D23. Residues R91, R143, and R146 each coordinate ATP. CTP contacts are provided by R91, R143, and R146. The region spanning 232–333 (TGVHVMMVID…TRLVERCDAL (102 aa)) is the HD domain.

This sequence belongs to the tRNA nucleotidyltransferase/poly(A) polymerase family. Bacterial CCA-adding enzyme type 1 subfamily. In terms of assembly, monomer. Can also form homodimers and oligomers. The cofactor is Mg(2+). Ni(2+) is required as a cofactor.

It carries out the reaction a tRNA precursor + 2 CTP + ATP = a tRNA with a 3' CCA end + 3 diphosphate. It catalyses the reaction a tRNA with a 3' CCA end + 2 CTP + ATP = a tRNA with a 3' CCACCA end + 3 diphosphate. Catalyzes the addition and repair of the essential 3'-terminal CCA sequence in tRNAs without using a nucleic acid template. Adds these three nucleotides in the order of C, C, and A to the tRNA nucleotide-73, using CTP and ATP as substrates and producing inorganic pyrophosphate. tRNA 3'-terminal CCA addition is required both for tRNA processing and repair. Also involved in tRNA surveillance by mediating tandem CCA addition to generate a CCACCA at the 3' terminus of unstable tRNAs. While stable tRNAs receive only 3'-terminal CCA, unstable tRNAs are marked with CCACCA and rapidly degraded. This chain is Multifunctional CCA protein, found in Cupriavidus metallidurans (strain ATCC 43123 / DSM 2839 / NBRC 102507 / CH34) (Ralstonia metallidurans).